The sequence spans 318 residues: Cis-3-alkyl-4-alkyloxetan-2-one decarboxylase (318 aa).

The region spanning 30–275 is the AB hydrolase-1 domain; it reads PVVMVHGNPS…ADCGHYILED (246 aa).

It belongs to the AB hydrolase superfamily.

The catalysed reaction is a cis-3-alkyl-4-alkyloxetan-2-one = a cis-alkene + CO2. Involved in olefin biosynthesis. Catalyzes the elimination of carbon dioxide from beta-lactones to form the final olefin product. The S.oneidensis oleABCD genes produce 3,6,9,12,15,19,22,25,28-hentriacontanonaene, which may aid the cells in adapting to a sudden drop in temperature. The chain is Cis-3-alkyl-4-alkyloxetan-2-one decarboxylase from Shewanella oneidensis (strain ATCC 700550 / JCM 31522 / CIP 106686 / LMG 19005 / NCIMB 14063 / MR-1).